We begin with the raw amino-acid sequence, 107 residues long: Antimicrobial peptide microplusin (107 aa).

Residues 1–19 (MKSLLVCLVLAVVVLVASG) form the signal peptide. 3 disulfide bridges follow: Cys25/Cys60, Cys38/Cys88, and Cys49/Cys54. Residues 86-107 (TDCDHSHGHEHSHGHEHGHGHH) form a disordered region. Positions 87 to 107 (DCDHSHGHEHSHGHEHGHGHH) are enriched in basic and acidic residues.

Its subcellular location is the secreted. Has bacteriostatic activity against Gram-positive bacteria, but not against Gram-negative bacteria. Has fungistatic activity against some but not all fungi. Binds and sequesters copper and iron ions. Copper-chelating is crucial for antimicrobial activity against M.luteus. The chain is Antimicrobial peptide microplusin from Ixodes scapularis (Black-legged tick).